Here is a 38-residue protein sequence, read N- to C-terminus: Large ribosomal subunit protein bL36 (38 aa).

It belongs to the bacterial ribosomal protein bL36 family.

The sequence is that of Large ribosomal subunit protein bL36 from Phytoplasma mali (strain AT).